Reading from the N-terminus, the 221-residue chain is Histidine biosynthesis bifunctional protein HisIE (221 aa).

The segment at 1–121 (MNITKIDWQK…KKQQFANWAW (121 aa)) is phosphoribosyl-AMP cyclohydrolase. The phosphoribosyl-ATP pyrophosphohydrolase stretch occupies residues 122–221 (FIKLEQHLKE…IGLHPEGGNK (100 aa)).

This sequence in the N-terminal section; belongs to the PRA-CH family. In the C-terminal section; belongs to the PRA-PH family.

It is found in the cytoplasm. The enzyme catalyses 1-(5-phospho-beta-D-ribosyl)-ATP + H2O = 1-(5-phospho-beta-D-ribosyl)-5'-AMP + diphosphate + H(+). It catalyses the reaction 1-(5-phospho-beta-D-ribosyl)-5'-AMP + H2O = 1-(5-phospho-beta-D-ribosyl)-5-[(5-phospho-beta-D-ribosylamino)methylideneamino]imidazole-4-carboxamide. The protein operates within amino-acid biosynthesis; L-histidine biosynthesis; L-histidine from 5-phospho-alpha-D-ribose 1-diphosphate: step 2/9. It participates in amino-acid biosynthesis; L-histidine biosynthesis; L-histidine from 5-phospho-alpha-D-ribose 1-diphosphate: step 3/9. The polypeptide is Histidine biosynthesis bifunctional protein HisIE (hisI) (Haemophilus influenzae (strain ATCC 51907 / DSM 11121 / KW20 / Rd)).